We begin with the raw amino-acid sequence, 388 residues long: Protein TsgA homolog (388 aa).

Transmembrane regions (helical) follow at residues 11–31 (WISF…GMIM), 50–70 (TFLN…IEII), 77–97 (IFSF…NSIF), 101–121 (INMF…TFII), 133–153 (LLLL…IVTA), 160–180 (IIWY…FLLT), 206–226 (VFLL…FISW), 244–264 (SLVS…SFII), 268–288 (NLYR…YCFI), 298–318 (YIII…ITLA), 332–352 (LILL…SPIV), and 360–380 (TLIS…LIYF).

Belongs to the major facilitator superfamily. TsgA family.

It is found in the cell membrane. The sequence is that of Protein TsgA homolog from Buchnera aphidicola subsp. Acyrthosiphon pisum (strain Tuc7).